The following is a 283-amino-acid chain: Protein ATAF2 (283 aa).

In terms of domain architecture, NAC spans 7–159; sequence LPAGFRFHPT…DWVLCRIYNK (153 aa). The DNA-binding element occupies 103–165; that stretch reads LGIKKALVFY…IYNKKGTMEK (63 aa). The segment at 171–211 is disordered; the sequence is EKPRTTTMAEQSSSPFDTSDSTYPTLQEDDSSSSGGHGHVV. Residues 175 to 195 are compositionally biased toward polar residues; sequence TTTMAEQSSSPFDTSDSTYPT.

Homodimer. Interacts with AHK2. Interacts with AHL12 and AHL27. Interacts with the helicase domain of the tobamovirus (TMV) replicase. In terms of tissue distribution, expressed in roots, cotyledons, rosette leaves, cauline leaves and mature flowers. Expressed at low levels in stems and flower buds.

The protein resides in the nucleus. Functionally, involved in disease resistance response. May function as repressor of pathogenesis-related proteins. May function in the regulation of host basal defense responses against viral infection. Transcriptional activator involved in responses to wounding and infection with tobamovirus (TMV). Binds to the DNA sequences 5'-AAAATATCT-3' and 5'AGATTTTT-3' of CYP734A1/BAS1 and CYP72C1/SOB7 promoters, respectively. Acts as a suppressor of the brassinosteroid (BR)-inactivating enzymes CYP734A1/BAS1 and CYP72C1/SOB7, and prevents their expression in almost all tissues. Plays a central role in integrating BR homeostasis and seedling development. Regulates the spatial regulation of BR homeostasis and participates in the regulation of hypocotyl elongation and root growth by suppressing BR catabolism. Mediates connection between BR catabolism and photomorphogenesis. Binds to, and transactivates the promoter of the auxin biosynthetic gene NIT2. Stress-responsive NAC transcription factor involved in ABA-inducible leaf senescence signaling. Required for normal seed development and morphology. This is Protein ATAF2 (NAC081) from Arabidopsis thaliana (Mouse-ear cress).